A 29-amino-acid chain; its full sequence is Kappa-sparatoxin-Hv1e (29 aa).

3 cysteine pairs are disulfide-bonded: Cys3–Cys17, Cys10–Cys22, and Cys16–Cys26.

As to expression, expressed by the venom gland.

Its subcellular location is the secreted. Its function is as follows. Inhibitor of voltage-gated potassium channels of the Kv4/KCND family. Blocks calcium channels (Cav). This is Kappa-sparatoxin-Hv1e from Heteropoda venatoria (Brown huntsman spider).